A 112-amino-acid polypeptide reads, in one-letter code: Nucleoid-associated protein lpp2803 (112 aa).

It belongs to the YbaB/EbfC family. As to quaternary structure, homodimer.

It is found in the cytoplasm. Its subcellular location is the nucleoid. Binds to DNA and alters its conformation. May be involved in regulation of gene expression, nucleoid organization and DNA protection. The protein is Nucleoid-associated protein lpp2803 of Legionella pneumophila (strain Paris).